The following is a 543-amino-acid chain: MLQIASGNREEGQVVELKKTKYLPYLFNLVMPKSFYHSHNRIVVARLYSNVHKHDKQAAEFFEGFQTPCFEVPASMFPGEAPLNKIVFMPPVMLPMGFEAGGVFGPGVLPRRSYPIDLTASGHKGQSPPLFVGLRRLYVQLPSEIESFLDKMGEFPATQDTLVYGMRRSNQLLKEEQAQELMLRNDLSLSMAYNLPAPPTPPSPYPYRHVPVQYNIYTPDLSNVLMMMPHQRKLTVAILSTVNNPHVPSVALATMGDEECPKFELPSDVFPICEGVNRPIFLPRRFLPKGFESGCVFKPGSLSELWFMGYMGRFSPPQPQHNCAITPPLFVGKISRVVLAFDLMKNIQMEYGAAQSSAQSEGSLNAVEPKKPNVPITKGFLVMETEHPTPPSGGYSLQSYQEGSAKGCVVKVEKGETQEMDEAHPTKEESKSEEEGEVQSGSQEEKYLSWFKVDSDIDLIAETMVDMGTAQMSLIDEEALPGVDGACVLNQLREVFEDRNEIRQNIDQLIHDHIYRMNRDRMLALRLPIRTCFRCGLLPCRHF.

The span at 415–430 (GETQEMDEAHPTKEES) shows a compositional bias: basic and acidic residues. Residues 415 to 443 (GETQEMDEAHPTKEESKSEEEGEVQSGSQ) are disordered.

It belongs to the DM7 family.

The chain is DM7 family protein GG19680 from Drosophila erecta (Fruit fly).